The following is a 133-amino-acid chain: Large ribosomal subunit protein bL20 (133 aa).

Belongs to the bacterial ribosomal protein bL20 family.

In terms of biological role, binds directly to 23S ribosomal RNA and is necessary for the in vitro assembly process of the 50S ribosomal subunit. It is not involved in the protein synthesizing functions of that subunit. The chain is Large ribosomal subunit protein bL20 from Mesorhizobium japonicum (strain LMG 29417 / CECT 9101 / MAFF 303099) (Mesorhizobium loti (strain MAFF 303099)).